A 262-amino-acid chain; its full sequence is 5'-nucleotidase SurE (262 aa).

Positions 8, 9, 41, and 97 each coordinate a divalent metal cation.

It belongs to the SurE nucleotidase family. A divalent metal cation is required as a cofactor.

It is found in the cytoplasm. It carries out the reaction a ribonucleoside 5'-phosphate + H2O = a ribonucleoside + phosphate. Its function is as follows. Nucleotidase that shows phosphatase activity on nucleoside 5'-monophosphates. This Methanococcus maripaludis (strain DSM 14266 / JCM 13030 / NBRC 101832 / S2 / LL) protein is 5'-nucleotidase SurE.